The following is a 624-amino-acid chain: Chaperone protein HtpG (624 aa).

Residues Met1 to Arg336 form an a; substrate-binding region. Residues Glu337 to Lys552 are b. The tract at residues Leu553 to Ser624 is c.

This sequence belongs to the heat shock protein 90 family. As to quaternary structure, homodimer.

The protein resides in the cytoplasm. Functionally, molecular chaperone. Has ATPase activity. This chain is Chaperone protein HtpG, found in Escherichia coli O1:K1 / APEC.